A 424-amino-acid polypeptide reads, in one-letter code: Tyrosine--tRNA ligase (424 aa).

L-tyrosine is bound at residue Tyr-37. Residues 42 to 51 (PTADSLHLGH) carry the 'HIGH' region motif. L-tyrosine contacts are provided by Tyr-174 and Gln-178. The short motif at 234 to 238 (KFGKT) is the 'KMSKS' region element. Lys-237 is a binding site for ATP. In terms of domain architecture, S4 RNA-binding spans 357-414 (TGLIDALVASGLAKSKSEARTFIQSGSVAINGNKAEALDHAIGGDELLYGRFTILRRG).

This sequence belongs to the class-I aminoacyl-tRNA synthetase family. TyrS type 1 subfamily. As to quaternary structure, homodimer.

The protein resides in the cytoplasm. The catalysed reaction is tRNA(Tyr) + L-tyrosine + ATP = L-tyrosyl-tRNA(Tyr) + AMP + diphosphate + H(+). Catalyzes the attachment of tyrosine to tRNA(Tyr) in a two-step reaction: tyrosine is first activated by ATP to form Tyr-AMP and then transferred to the acceptor end of tRNA(Tyr). The protein is Tyrosine--tRNA ligase of Dechloromonas aromatica (strain RCB).